The chain runs to 77 residues: Bradykinin-potentiating peptide (77 aa).

A signal peptide spans 1–22 (MNKKTLLVIFIVTLLIADEVNS). The propeptide occupies 74–77 (RRRR).

This sequence belongs to the non-disulfide-bridged peptide (NDBP) superfamily. Long chain multifunctional peptide (group 2) family. Expressed by the venom gland.

Its subcellular location is the secreted. In terms of biological role, antimicrobial peptide. May also inhibit angiotensin-converting enzyme (ACE) and potentiate bradykinin (BK). The protein is Bradykinin-potentiating peptide of Tityus discrepans (Venezuelan scorpion).